Here is a 495-residue protein sequence, read N- to C-terminus: UDP-glycosyltransferase 1 (495 aa).

Histidine 24 serves as the catalytic Proton acceptor. Residue histidine 24 participates in an anthocyanidin binding. The active-site Charge relay is the aspartate 129. 6 residues coordinate UDP-alpha-D-glucose: glutamine 358, histidine 373, tryptophan 376, asparagine 377, serine 378, and glutamate 381. Glycine 396 contacts an anthocyanidin. UDP-alpha-D-glucose is bound by residues aspartate 397 and glutamine 398.

Belongs to the UDP-glycosyltransferase family.

The enzyme catalyses oleanolate + UDP-alpha-D-glucose = oleanolate 3-O-beta-D-glucoside + UDP + H(+). In terms of biological role, catalyzes the transfer of a glucose (Glc) moiety from UDP-Glc to the C-3 position of the oleanane sapogenins oleanolate and hederagenin. The monoglucosylated hederagenin 3-O-beta-D-glucoside is a feeding deterrent of the yellow-striped flea beetle (Phyllotreta nemorum). This Barbarea vulgaris (Yellow rocket) protein is UDP-glycosyltransferase 1.